A 1938-amino-acid chain; its full sequence is Autophagy-related protein 2 homolog A (1938 aa).

The region spanning E14–P111 is the Chorein N-terminal domain. A phosphoserine mark is found at S765, S878, S892, S894, S1266, S1301, and S1309. The disordered stretch occupies residues D1242–P1272. Residues L1315 to S1359 form a disordered region. The segment covering E1343 to S1359 has biased composition (acidic residues). Residues D1358–D1404 are WIPI-interacting. S1402 carries the phosphoserine modification. Disordered stretches follow at residues P1438–R1476 and G1614–P1657. The span at T1446–P1464 shows a compositional bias: low complexity.

The protein belongs to the ATG2 family. Interacts with ATG9A (via C-terminus). Interacts (via WIPI-interacting region) with WDR45B/WIPI3. Interacts (via WIPI-interacting region) with WDR45/WIPI4. Interacts with TMEM41B. Interacts with VMP1.

It is found in the preautophagosomal structure membrane. It localises to the lipid droplet. The protein localises to the endoplasmic reticulum membrane. It catalyses the reaction a 1,2-diacyl-sn-glycero-3-phospho-L-serine(in) = a 1,2-diacyl-sn-glycero-3-phospho-L-serine(out). It carries out the reaction a 1,2-diacyl-sn-glycero-3-phosphoethanolamine(in) = a 1,2-diacyl-sn-glycero-3-phosphoethanolamine(out). Lipid transfer protein involved in autophagosome assembly. Tethers the edge of the isolation membrane (IM) to the endoplasmic reticulum (ER) and mediates direct lipid transfer from ER to IM for IM expansion. Binds to the ER exit site (ERES), which is the membrane source for autophagosome formation, and extracts phospholipids from the membrane source and transfers them to ATG9 (ATG9A or ATG9B) to the IM for membrane expansion. Lipid transfer activity is enhanced by WIPI1 and WDR45/WIPI4, which promote ATG2A-association with phosphatidylinositol 3-monophosphate (PI3P)-containing membranes. Also regulates lipid droplets morphology and distribution within the cell. The sequence is that of Autophagy-related protein 2 homolog A from Homo sapiens (Human).